The primary structure comprises 333 residues: Ketol-acid reductoisomerase (NADP(+)) (333 aa).

One can recognise a KARI N-terminal Rossmann domain in the interval 2 to 182; that stretch reads ANIYYDSDCD…GGGRAGILET (181 aa). Residues 25–28, Lys48, Ser51, Ser53, and 83–86 each bind NADP(+); these read YGSQ and DTIQ. His108 is a catalytic residue. Residue Gly134 coordinates NADP(+). Residues 183–331 enclose the KARI C-terminal knotted domain; sequence SFREETETDL…KKLRSMMKWL (149 aa). 4 residues coordinate Mg(2+): Asp191, Glu195, Glu227, and Glu231. Ser252 is a binding site for substrate.

It belongs to the ketol-acid reductoisomerase family. Mg(2+) serves as cofactor.

It carries out the reaction (2R)-2,3-dihydroxy-3-methylbutanoate + NADP(+) = (2S)-2-acetolactate + NADPH + H(+). It catalyses the reaction (2R,3R)-2,3-dihydroxy-3-methylpentanoate + NADP(+) = (S)-2-ethyl-2-hydroxy-3-oxobutanoate + NADPH + H(+). The protein operates within amino-acid biosynthesis; L-isoleucine biosynthesis; L-isoleucine from 2-oxobutanoate: step 2/4. It participates in amino-acid biosynthesis; L-valine biosynthesis; L-valine from pyruvate: step 2/4. Its function is as follows. Involved in the biosynthesis of branched-chain amino acids (BCAA). Catalyzes an alkyl-migration followed by a ketol-acid reduction of (S)-2-acetolactate (S2AL) to yield (R)-2,3-dihydroxy-isovalerate. In the isomerase reaction, S2AL is rearranged via a Mg-dependent methyl migration to produce 3-hydroxy-3-methyl-2-ketobutyrate (HMKB). In the reductase reaction, this 2-ketoacid undergoes a metal-dependent reduction by NADPH to yield (R)-2,3-dihydroxy-isovalerate. The sequence is that of Ketol-acid reductoisomerase (NADP(+)) from Leptospira interrogans serogroup Icterohaemorrhagiae serovar copenhageni (strain Fiocruz L1-130).